The sequence spans 419 residues: L-rhamnose isomerase (419 aa).

Residues H262, D294, and D296 each contribute to the Mn(2+) site.

It belongs to the rhamnose isomerase family. As to quaternary structure, homotetramer. The cofactor is Mn(2+).

It is found in the cytoplasm. The catalysed reaction is L-rhamnopyranose = L-rhamnulose. Its pathway is carbohydrate degradation; L-rhamnose degradation; glycerone phosphate from L-rhamnose: step 1/3. Its function is as follows. Catalyzes the interconversion of L-rhamnose and L-rhamnulose. The protein is L-rhamnose isomerase of Escherichia coli O9:H4 (strain HS).